Here is a 210-residue protein sequence, read N- to C-terminus: Glutathione S-transferase 3 (210 aa).

The GST N-terminal domain occupies 1 to 80 (MDFYYLPLSA…YLVEKYGKQN (80 aa)). Glutathione contacts are provided by residues Ser9, 50 to 52 (HTI), and 64 to 66 (ESR). One can recognise a GST C-terminal domain in the interval 87-208 (CPKKRALINQ…AGCLEMKKYF (122 aa)).

Belongs to the GST superfamily. Theta family. Homodimer.

It carries out the reaction RX + glutathione = an S-substituted glutathione + a halide anion + H(+). In terms of biological role, conjugation of reduced glutathione to a wide number of exogenous and endogenous hydrophobic electrophiles. This is Glutathione S-transferase 3 (Gst3) from Musca domestica (House fly).